Consider the following 363-residue polypeptide: Protein-arginine kinase (363 aa).

Positions 24–255 (IVLSSRIRLA…EQLIAQERAA (232 aa)) constitute a Phosphagen kinase C-terminal domain. Residues 27 to 31 (SSRIR), His-92, Arg-126, 177 to 181 (RASVM), and 208 to 213 (RGTYGE) contribute to the ATP site. Residues 338 to 343 (RDVRRA) carry the RDXXRA motif of the pArg binding pocket involved in allosteric regulation motif.

This sequence belongs to the ATP:guanido phosphotransferase family. As to quaternary structure, homodimer. Dimerization is important for full catalytic activity.

The enzyme catalyses L-arginyl-[protein] + ATP = N(omega)-phospho-L-arginyl-[protein] + ADP + H(+). With respect to regulation, appears to be allosterically activated by the binding of pArg-containing polypeptides to the pArg-binding pocket localized in the C-terminal domain of McsB. Functionally, catalyzes the specific phosphorylation of arginine residues in a large number of proteins. Is part of the bacterial stress response system, where it is involved in regulating the global heat shock repressor CtsR; phosphorylates arginine residues in the winged helix-turn-helix domain of CtsR, thereby preventing its binding to DNA and consequently inducing the expression of repressed genes. Protein arginine phosphorylation has a physiologically important role and is involved in the regulation of many critical cellular processes, such as protein homeostasis, motility, competence, and stringent and stress responses, by regulating gene expression and protein activity. Acts exclusively on Arg residues, since it cannot phosphorylate Tyr, Ser, Thr, His, Asp and Lys. Has no free arginine kinase activity. This is Protein-arginine kinase from Geobacillus stearothermophilus (Bacillus stearothermophilus).